A 320-amino-acid chain; its full sequence is Methionyl-tRNA formyltransferase (320 aa).

111-114 (SLLP) lines the (6S)-5,6,7,8-tetrahydrofolate pocket.

It belongs to the Fmt family.

The catalysed reaction is L-methionyl-tRNA(fMet) + (6R)-10-formyltetrahydrofolate = N-formyl-L-methionyl-tRNA(fMet) + (6S)-5,6,7,8-tetrahydrofolate + H(+). Functionally, attaches a formyl group to the free amino group of methionyl-tRNA(fMet). The formyl group appears to play a dual role in the initiator identity of N-formylmethionyl-tRNA by promoting its recognition by IF2 and preventing the misappropriation of this tRNA by the elongation apparatus. This chain is Methionyl-tRNA formyltransferase, found in Pediococcus pentosaceus (strain ATCC 25745 / CCUG 21536 / LMG 10740 / 183-1w).